The chain runs to 633 residues: Transcriptional repressor p66-alpha (633 aa).

Residues 1–18 show a composition bias toward basic and acidic residues; the sequence is MTEEACRTRSQKRALERD. Disordered regions lie at residues 1-59 and 73-119; these read MTEE…PTQG and RGEG…RVNG. Phosphothreonine is present on residues Thr-20 and Thr-49. Residues 86-99 show a composition bias toward basic and acidic residues; that stretch reads RTSHSDMKSERRPP. Lys-93 is covalently cross-linked (Glycyl lysine isopeptide (Lys-Gly) (interchain with G-Cter in SUMO2)). Phosphoserine occurs at positions 100, 107, 113, 114, and 137. The span at 108–119 shows a compositional bias: polar residues; sequence DNEQPSSPRVNG. Residues 139-174 adopt a coiled-coil conformation; it reads EERERMIKQLKEELRLEEAKLVLLKKLRQSQIQKEA. Residues 144 to 178 are CR1; interaction with HDAC1, HDAC2, MBD2 and MTA2; the sequence is MIKQLKEELRLEEAKLVLLKKLRQSQIQKEATAQK. Residues 172–188 are compositionally biased toward polar residues; the sequence is KEATAQKPTGSVGSTVT. Residues 172–238 form a disordered region; the sequence is KEATAQKPTG…QASSKLGPQA (67 aa). A Glycyl lysine isopeptide (Lys-Gly) (interchain with G-Cter in SUMO2) cross-link involves residue Lys-178. Residues 181–295 form an interaction with ZMYND8 region; sequence GSVGSTVTTP…IIQQGLIRVA (115 aa). Thr-189 carries the post-translational modification Phosphothreonine. Residues 196–212 show a composition bias toward polar residues; sequence GTQNIPAGKPSLQTSSA. A Glycyl lysine isopeptide (Lys-Gly) (interchain with G-Cter in SUMO2) cross-link involves residue Lys-204. Arg-225 bears the Omega-N-methylarginine mark. A compositionally biased stretch (polar residues) spans 228 to 238; it reads QQASSKLGPQA. Lys-233 is covalently cross-linked (Glycyl lysine isopeptide (Lys-Gly) (interchain with G-Cter in SUMO2)). Arg-249, Arg-258, and Arg-273 each carry omega-N-methylarginine. A Phosphoserine modification is found at Ser-275. Arg-285 bears the Omega-N-methylarginine mark. Residues Ser-340 and Ser-343 each carry the phosphoserine modification. Residues 340–480 form a CR2; histone tail-binding and interaction with CHD4 and CDK2AP1 region; the sequence is SPASRQAAAK…EIEQRLLQQG (141 aa). A GATA-type zinc finger spans residues 411–464; the sequence is SREPYMCAQCKTDFTCRWREEKSGAIMCENCMTTNQKKALKVEHTSRLKAAFVK. Glycyl lysine isopeptide (Lys-Gly) (interchain with G-Cter in SUMO2) cross-links involve residues Lys-464 and Lys-487. Ser-512 carries the post-translational modification Phosphoserine. Asymmetric dimethylarginine; alternate is present on Arg-539. Omega-N-methylarginine; alternate is present on Arg-539. 2 positions are modified to phosphoserine: Ser-546 and Ser-548. Lys-550 participates in a covalent cross-link: Glycyl lysine isopeptide (Lys-Gly) (interchain with G-Cter in SUMO2). Ser-556 carries the post-translational modification Phosphoserine. Positions 561–585 are disordered; it reads VSRTGRHSERTVSAGKGSATSNWKK. Lys-585 is covalently cross-linked (Glycyl lysine isopeptide (Lys-Gly) (interchain with G-Cter in SUMO2)). Ser-598 is modified (phosphoserine). Lys-605 participates in a covalent cross-link: Glycyl lysine isopeptide (Lys-Gly) (interchain with G-Cter in SUMO2).

As to quaternary structure, homooligomer. Component of the nucleosome remodeling and deacetylase (NuRD) repressor complex, composed of core proteins MTA1, MTA2, MTA3, RBBP4, RBBP7, HDAC1, HDAC2, MBD2, MBD3, and peripherally associated proteins CDK2AP1, CDK2AP2, GATAD2A, GATAD2B, CHD3, CHD4 and CHD5. The exact stoichiometry of the NuRD complex is unknown, and some subunits such as MBD2 and MBD3, GATAD2A and GATAD2B, and CHD3, CHD4 and CHD5 define mutually exclusive NuRD complexes. Component of the MeCP1 histone deacetylase complex. Interacts with CDK2AP1. Interacts with CHD4. Interacts with ERCC6. Interacts with HDAC1. Interacts with HDAC2. Interacts with MBD2; this interaction is required for the enhancement of MBD2-mediated repression and for targeting to the chromatin. Interacts with MBD3. Interacts with MTA2. Interacts with ZMYND8. Interacts with histone tails, including that of histones H2A, H2B, H3 and H4, the interaction is reduced by histone acetylation. Ubiquitous, both in fetal and adult tissues.

It is found in the nucleus speckle. It localises to the nucleus. The protein resides in the chromosome. Transcriptional repressor. Acts as a component of the histone deacetylase NuRD complex which participates in the remodeling of chromatin. Enhances MBD2-mediated repression. Efficient repression requires the presence of GATAD2B. The sequence is that of Transcriptional repressor p66-alpha (GATAD2A) from Homo sapiens (Human).